A 182-amino-acid chain; its full sequence is Peptidyl-tRNA hydrolase (182 aa).

Y14 is a binding site for tRNA. The active-site Proton acceptor is the H19. Residues F64, N66, and N112 each contribute to the tRNA site.

The protein belongs to the PTH family. Monomer.

Its subcellular location is the cytoplasm. It carries out the reaction an N-acyl-L-alpha-aminoacyl-tRNA + H2O = an N-acyl-L-amino acid + a tRNA + H(+). Functionally, hydrolyzes ribosome-free peptidyl-tRNAs (with 1 or more amino acids incorporated), which drop off the ribosome during protein synthesis, or as a result of ribosome stalling. In terms of biological role, catalyzes the release of premature peptidyl moieties from peptidyl-tRNA molecules trapped in stalled 50S ribosomal subunits, and thus maintains levels of free tRNAs and 50S ribosomes. The chain is Peptidyl-tRNA hydrolase from Wolbachia pipientis wMel.